We begin with the raw amino-acid sequence, 488 residues long: Stress activated transcription factor atfs-1 (488 aa).

The N-terminal 23 residues, 1–23, are a transit peptide targeting the mitochondrion; sequence MFSRVGRLTTFGAQAVSNCPFRR. Positions 138–191 are disordered; the sequence is SWQNGSSVGHPHGHQQQQQTCQQPPTHSSTTETMHDFSNFGDNMGSPLFQSPSK. The span at 142–168 shows a compositional bias: low complexity; sequence GSSVGHPHGHQQQQQTCQQPPTHSSTT. Lys-342 participates in a covalent cross-link: Glycyl lysine isopeptide (Lys-Gly) (interchain with G-Cter in smo-1). Residues 353-400 are disordered; the sequence is QRDDDDEDYIPASEARRTSSRLNRKSATPTYLRRRDSERSWTPASDDY. The 64-residue stretch at 420 to 483 folds into the bZIP domain; sequence DEETDRRRML…NSMKKELRKM (64 aa). The segment at 425–460 is basic motif; sequence RRRMLNRIAAVRYREKKRAEKKGRKMEFQEVADRNR. The short motif at 436–441 is the Nuclear localization signal element; the sequence is RYREKK. Residues 462-469 form a leucine-zipper region; the sequence is LLQKERQL.

Belongs to the bZIP family. May be desumoylated by ulp-4. Ubiquitously expressed.

Its subcellular location is the mitochondrion matrix. The protein localises to the cytoplasm. The protein resides in the nucleus. Its function is as follows. Acts as a transcription factor during mitochondrial stress by activating the mitochondrial unfolded protein response (mtUPR). Induces nuclear and mitochondrial gene transcription, including genes coding for mitochondrial chaperones and proteins involved in glycolysis, amino acid catabolism and innate immunity. Following mitochondrial stress, restores mitochondrial respiratory capacity by limiting the transcription of oxidative phosphorylation (OXPHOS) machinery genes and by promoting the assembly of OXPHOS complexes via the up-regulation of chaperone and assembly factor genes. Component of a feedback loop involving atfs-1, atgl-1 and hlh-11. Acts together with flp-7 to negatively regulate the expression of the transcription regulator hlh-11, to promote expression of atgl-1, and thus atgl-1-dependent fat oxidation in response to mitochondrial stress. In addition, functions with hlh-11 to maintain lifespan. Promotes mtDNA maintenance and propagation of deleterious mtDNA. This Caenorhabditis elegans protein is Stress activated transcription factor atfs-1.